The following is a 71-amino-acid chain: Pro-glucagon (71 aa).

The protein belongs to the glucagon family.

Its subcellular location is the secreted. Its function is as follows. Plays a key role in glucose metabolism and homeostasis. Regulates blood glucose by increasing gluconeogenesis and decreasing glycolysis. The chain is Pro-glucagon (gcg) from Piaractus mesopotamicus (Small-scaled pacu).